A 117-amino-acid chain; its full sequence is UPF0344 protein GK0697 (117 aa).

The next 4 helical transmembrane spans lie at 1–21 (MTHAHITSWLITIVLFFLAVS), 39–59 (LFYILTIVTGLLLLHSIASIS), 60–80 (ALYWLKALAGLWVIGAMEMVL), and 97–117 (VIALAVTLFLGLLLPLGFDLF).

The protein belongs to the UPF0344 family.

Its subcellular location is the cell membrane. The sequence is that of UPF0344 protein GK0697 from Geobacillus kaustophilus (strain HTA426).